The sequence spans 225 residues: 3-dehydroquinate dehydratase (225 aa).

Residues serine 6, 30-32, and arginine 62 contribute to the 3-dehydroquinate site; that span reads EWR. Histidine 118 acts as the Proton donor/acceptor in catalysis. Lysine 143 (schiff-base intermediate with substrate) is an active-site residue. 3-dehydroquinate-binding residues include arginine 186, serine 205, and glutamine 209.

It belongs to the type-I 3-dehydroquinase family. In terms of assembly, homodimer.

The catalysed reaction is 3-dehydroquinate = 3-dehydroshikimate + H2O. It functions in the pathway metabolic intermediate biosynthesis; chorismate biosynthesis; chorismate from D-erythrose 4-phosphate and phosphoenolpyruvate: step 3/7. Its function is as follows. Involved in the third step of the chorismate pathway, which leads to the biosynthesis of aromatic amino acids. Catalyzes the cis-dehydration of 3-dehydroquinate (DHQ) and introduces the first double bond of the aromatic ring to yield 3-dehydroshikimate. This is 3-dehydroquinate dehydratase from Streptococcus pneumoniae (strain P1031).